Consider the following 675-residue polypeptide: UvrABC system protein B (675 aa).

A Helicase ATP-binding domain is found at 35–192 (QGMRDGLMYQ…ARLVAMQYTR (158 aa)). Residue 48–55 (GVTGSGKT) participates in ATP binding. The Beta-hairpin signature appears at 101–124 (YYDYYQPEAYVPTRDLFIEKDSSI). The 167-residue stretch at 439–605 (QVDDLLGEIK…GVNKAVRELI (167 aa)) folds into the Helicase C-terminal domain. In terms of domain architecture, UVR spans 633-668 (AREIRRLEKLMTDHARNLEFEQAAAARDALNALKQR).

Belongs to the UvrB family. In terms of assembly, forms a heterotetramer with UvrA during the search for lesions. Interacts with UvrC in an incision complex.

The protein localises to the cytoplasm. Functionally, the UvrABC repair system catalyzes the recognition and processing of DNA lesions. A damage recognition complex composed of 2 UvrA and 2 UvrB subunits scans DNA for abnormalities. Upon binding of the UvrA(2)B(2) complex to a putative damaged site, the DNA wraps around one UvrB monomer. DNA wrap is dependent on ATP binding by UvrB and probably causes local melting of the DNA helix, facilitating insertion of UvrB beta-hairpin between the DNA strands. Then UvrB probes one DNA strand for the presence of a lesion. If a lesion is found the UvrA subunits dissociate and the UvrB-DNA preincision complex is formed. This complex is subsequently bound by UvrC and the second UvrB is released. If no lesion is found, the DNA wraps around the other UvrB subunit that will check the other stand for damage. The chain is UvrABC system protein B from Bordetella petrii (strain ATCC BAA-461 / DSM 12804 / CCUG 43448).